Reading from the N-terminus, the 120-residue chain is Large ribosomal subunit protein uL18 (120 aa).

It belongs to the universal ribosomal protein uL18 family. As to quaternary structure, part of the 50S ribosomal subunit; part of the 5S rRNA/L5/L18/L25 subcomplex. Contacts the 5S and 23S rRNAs.

This is one of the proteins that bind and probably mediate the attachment of the 5S RNA into the large ribosomal subunit, where it forms part of the central protuberance. This is Large ribosomal subunit protein uL18 from Sinorhizobium medicae (strain WSM419) (Ensifer medicae).